A 466-amino-acid polypeptide reads, in one-letter code: Alpha-1A adrenergic receptor (466 aa).

The Extracellular segment spans residues 1-27 (MVFLSGNASDSSNCTQPPAPVNISKAI). N-linked (GlcNAc...) asparagine glycosylation is found at Asn-7, Asn-13, and Asn-22. Residues 28-51 (LLGVILGGLILFGVLGNILVILSV) form a helical membrane-spanning segment. The Cytoplasmic segment spans residues 52-64 (ACHRHLHSVTHYY). A helical membrane pass occupies residues 65–88 (IVNLAVADLLLTSTVLPFSAIFEV). Residues 89-99 (LGYWAFGRVFC) lie on the Extracellular side of the membrane. Cys-99 and Cys-176 form a disulfide bridge. Residues 100–122 (NIWAAVDVLCCTASIMGLCIISI) traverse the membrane as a helical segment. The Cytoplasmic segment spans residues 123–143 (DRYIGVSYPLRYPTIVTQRRG). A helical membrane pass occupies residues 144 to 167 (LMALLCVWALSLVISIGPLFGWRQ). The Extracellular portion of the chain corresponds to 168 to 181 (PAPEDETICQINEE). A helical membrane pass occupies residues 182-205 (PGYVLFSALGSFYLPLAIILVMYC). The Cytoplasmic portion of the chain corresponds to 206 to 273 (RVYVVAKRES…FSREKKAAKT (68 aa)). Ser-215 bears the Phosphoserine; by PKA mark. A helical membrane pass occupies residues 274–297 (LGIVVGCFVLCWLPFFLVMPIGSF). The Extracellular portion of the chain corresponds to 298-305 (FPDFKPSE). A helical transmembrane segment spans residues 306-329 (TVFKIVFWLGYLNSCINPIIYPCS). The Cytoplasmic portion of the chain corresponds to 330-466 (SQEFKKAFQN…ISLSENGEEV (137 aa)). The Nuclear localization signal motif lies at 334 to 349 (KKAFQNVLRIQCLCRK). The S-palmitoyl cysteine moiety is linked to residue Cys-345.

It belongs to the G-protein coupled receptor 1 family. Adrenergic receptor subfamily. ADRA1A sub-subfamily. Homo- and heterooligomer. Heterooligomerizes with ADRA1B homooligomers in cardiac myocytes. Interacts with CAVIN4. Post-translationally, C-terminal Ser or Thr residues may be phosphorylated. As to expression, expressed in heart, brain, liver and prostate, but not in kidney, lung, adrenal, aorta and pituitary. Within the prostate, expressed in the apex, base, periurethral and lateral lobe. Isoform 4 is the most abundant isoform expressed in the prostate with high levels also detected in liver and heart.

Its subcellular location is the nucleus membrane. It localises to the cell membrane. The protein resides in the cytoplasm. It is found in the membrane. The protein localises to the caveola. Functionally, this alpha-adrenergic receptor mediates its action by association with G proteins that activate a phosphatidylinositol-calcium second messenger system. Its effect is mediated by G(q) and G(11) proteins. Nuclear ADRA1A-ADRA1B heterooligomers regulate phenylephrine(PE)-stimulated ERK signaling in cardiac myocytes. In Homo sapiens (Human), this protein is Alpha-1A adrenergic receptor (ADRA1A).